A 211-amino-acid polypeptide reads, in one-letter code: C-type lectin domain family 2 member L (211 aa).

The tract at residues 1 to 53 is disordered; that stretch reads MEPAREPPARARPPPPAARPAPAAPRPRSPAEAEARGPEGLLRRSGSGYEGST. Pro residues predominate over residues 10 to 28; sequence RARPPPPAARPAPAAPRPR. Position 29 is a phosphoserine (Ser29). The chain crosses the membrane as a helical span at residues 66-86; that stretch reads LLLGAIAVLLFAILVVMSILA. Disulfide bonds link Cys97–Cys108, Cys125–Cys205, and Cys184–Cys197. A C-type lectin domain is found at 104-206; it reads YGRKCYYFSE…CLTTRPWVCS (103 aa).

The protein localises to the membrane. The protein is C-type lectin domain family 2 member L (Clec2l) of Rattus norvegicus (Rat).